Here is a 371-residue protein sequence, read N- to C-terminus: Meiotic drive suppressor wtf18 (371 aa).

8 consecutive transmembrane segments (helical) span residues 86-106, 120-140, 153-173, 197-217, 233-253, 257-277, 287-307, and 321-341; these read FLLR…TAWV, AFSV…FCFF, VTVI…AQCV, DLVV…FGCV, CSIS…IWTL, LFGL…TKGL, ATGY…LFFY, and FIGN…GGIG.

Belongs to the WTF family. As to quaternary structure, homomer. Interacts with other proteins that exhibit high sequence similarity.

Its subcellular location is the spore membrane. It is found in the vacuole membrane. In terms of biological role, acts as a suppressor component of the dual wtf meiotic drive system, and can suppress but not confer meiotic drive by compatible poisons. Wtf meiotic drive systems promote unequal transmission of alleles from the parental zygote to progeny spores by encoding a poison and an antidote from the same locus; the poison is trans-acting and forms toxic aggregates in all spores within an ascus, wherease the antidote is spore-specific and targets aggregates for degradation by the vacuole. Meiotic drive by wtf systems therefore lead to poisoning of all progeny that do not inherit the dual poison/antidote allele, or express a compatible antidote. The protein is Meiotic drive suppressor wtf18 of Schizosaccharomyces kambucha (Fission yeast).